The following is a 253-amino-acid chain: Blue-light photoreceptor (253 aa).

Residues 6 to 79 enclose the PAS domain; sequence QFDVILKALN…AKIRHAINEK (74 aa). Cysteine 56 bears the S-4a-FMN cysteine mark. In terms of domain architecture, PAC spans 80 to 133; sequence STANVLLKNYRKDGTSFMNELTIEPIYDDHEHLYFVGIQKDVTTEHDYQLELEK. Positions 142-253 constitute an STAS domain; sequence STPIVPIKEN…STIKEALQFY (112 aa).

In terms of processing, FMN binds covalently to cysteine after exposure to blue light and this bond is spontaneously broken in the dark.

In terms of biological role, exhibits the same spectroscopical features and blue-light induced photochemistry as plants phototropins, with the reversible formation of a blue-shifted photoproduct, assigned to an FMN-cysteine thiol adduct. Positive regulator in the activation of the general stress transcription factor sigma-B. This chain is Blue-light photoreceptor, found in Listeria monocytogenes serovar 1/2a (strain ATCC BAA-679 / EGD-e).